A 299-amino-acid polypeptide reads, in one-letter code: 4-diphosphocytidyl-2-C-methyl-D-erythritol kinase (299 aa).

Residue Lys-11 is part of the active site. 94 to 104 serves as a coordination point for ATP; it reads PQGGGLGGGSS. Asp-136 is an active-site residue.

Belongs to the GHMP kinase family. IspE subfamily.

The catalysed reaction is 4-CDP-2-C-methyl-D-erythritol + ATP = 4-CDP-2-C-methyl-D-erythritol 2-phosphate + ADP + H(+). Its pathway is isoprenoid biosynthesis; isopentenyl diphosphate biosynthesis via DXP pathway; isopentenyl diphosphate from 1-deoxy-D-xylulose 5-phosphate: step 3/6. Its function is as follows. Catalyzes the phosphorylation of the position 2 hydroxy group of 4-diphosphocytidyl-2C-methyl-D-erythritol. The sequence is that of 4-diphosphocytidyl-2-C-methyl-D-erythritol kinase from Bordetella bronchiseptica (strain ATCC BAA-588 / NCTC 13252 / RB50) (Alcaligenes bronchisepticus).